The following is a 204-amino-acid chain: Urease accessory protein UreG (204 aa).

A GTP-binding site is contributed by 11–18; the sequence is GPVGAGKT.

It belongs to the SIMIBI class G3E GTPase family. UreG subfamily. In terms of assembly, homodimer. UreD, UreF and UreG form a complex that acts as a GTP-hydrolysis-dependent molecular chaperone, activating the urease apoprotein by helping to assemble the nickel containing metallocenter of UreC. The UreE protein probably delivers the nickel.

Its subcellular location is the cytoplasm. Its function is as follows. Facilitates the functional incorporation of the urease nickel metallocenter. This process requires GTP hydrolysis, probably effectuated by UreG. In Staphylococcus aureus (strain bovine RF122 / ET3-1), this protein is Urease accessory protein UreG.